Consider the following 146-residue polypeptide: Large ribosomal subunit protein bL19 (146 aa).

This sequence belongs to the bacterial ribosomal protein bL19 family.

In terms of biological role, this protein is located at the 30S-50S ribosomal subunit interface and may play a role in the structure and function of the aminoacyl-tRNA binding site. The protein is Large ribosomal subunit protein bL19 of Bartonella bacilliformis (strain ATCC 35685 / KC583 / Herrer 020/F12,63).